Consider the following 190-residue polypeptide: Acyl-acyl carrier protein thioesterase ATL3, chloroplastic (190 aa).

The N-terminal 49 residues, 1 to 49 (MFLQVTGTATPAMPAVVFLNSWRRPLSIPLRSVKTFKPLAFFDLKGGKG), are a transit peptide targeting the chloroplast. Residue Asp-66 is part of the active site.

It belongs to the 4-hydroxybenzoyl-CoA thioesterase family. Highly expressed in stems and flowers and at lower levels in rosette leaves, cauline leaves and siliques.

The protein localises to the plastid. It is found in the chloroplast. Functionally, acyl-ACP thioesterase involved in the production of fatty acids and beta-keto fatty acids. Can produce fatty acids of long chain (14:1 and 16:1) and beta-keto fatty acids of medium to long chain (8:0, 10:0, 12:0, 12:1, 14:0 and 16:0) when expressed in a heterologous organism (E.coli). Possesses thioesterase activity for lauroyl-ACP (12:0-ACP) in vitro. May play a role in the generation of long fatty acids in the chloroplast. The sequence is that of Acyl-acyl carrier protein thioesterase ATL3, chloroplastic from Arabidopsis thaliana (Mouse-ear cress).